Consider the following 129-residue polypeptide: Small ribosomal subunit protein uS11 (129 aa).

It belongs to the universal ribosomal protein uS11 family. As to quaternary structure, part of the 30S ribosomal subunit. Interacts with proteins S7 and S18. Binds to IF-3.

Its function is as follows. Located on the platform of the 30S subunit, it bridges several disparate RNA helices of the 16S rRNA. Forms part of the Shine-Dalgarno cleft in the 70S ribosome. This chain is Small ribosomal subunit protein uS11, found in Lawsonia intracellularis (strain PHE/MN1-00).